Consider the following 447-residue polypeptide: KICSTOR complex protein ITFG2 (447 aa).

The FG-GAP 1; atypical repeat unit spans residues 19-48; it reads FPHAICLGDVDNDTLNELVVGDTSGKVSVY. At Ser104 the chain carries Phosphoserine. One copy of the FG-GAP 2; atypical repeat lies at 126–155; that stretch reads NTKVMLISDIDGDGCRELVVGYTDRVVRAF. Ser220 carries the post-translational modification Phosphoserine.

As to quaternary structure, part of the KICSTOR complex composed of KPTN, ITFG2, KICS2 and SZT2. SZT2 probably serves as a link between the other three proteins in the KICSTOR complex and may mediate the direct interaction with the GATOR complex via GATOR1. The KICSTOR complex interacts directly with the GATOR1 complex and most probably indirectly with the GATOR2 complex in an amino acid-independent manner.

It localises to the lysosome membrane. As part of the KICSTOR complex functions in the amino acid-sensing branch of the TORC1 signaling pathway. Recruits, in an amino acid-independent manner, the GATOR1 complex to the lysosomal membranes and allows its interaction with GATOR2 and the RAG GTPases. Functions upstream of the RAG GTPases and is required to negatively regulate mTORC1 signaling in absence of amino acids. In absence of the KICSTOR complex mTORC1 is constitutively localized to the lysosome and activated. The KICSTOR complex is also probably involved in the regulation of mTORC1 by glucose. The polypeptide is KICSTOR complex protein ITFG2 (Homo sapiens (Human)).